The sequence spans 256 residues: NAP1-related protein 1 (256 aa).

Positions 23–64 form a coiled coil; the sequence is IDAELVLSIEKLQEIQDDLEKINEKASDEVLEVEQKYNVIRK. The interval 220–256 is disordered; sequence LTYFNNDADEEDFDGDDDGDEEGEEDDDDEEEEDGEE. Acidic residues predominate over residues 226 to 256; sequence DADEEDFDGDDDGDEEGEEDDDDEEEEDGEE.

Belongs to the nucleosome assembly protein (NAP) family. In terms of assembly, can form homomeric and heteromeric protein complexes with NRP2. Binds histones H2A and H2B and associates with chromatin in vivo. Ubiquitous.

It localises to the cytoplasm. The protein localises to the nucleus. Functionally, acts as a histone H2A/H2B chaperone in nucleosome assembly, playing a critical role for the correct expression of genes involved in root proliferation and patterning. Required with NRP2 for the maintenance of cell proliferation and differentiation in postembryonic root growth. Involved in both intramolecular and intermolecular somatic homologous recombination. In Arabidopsis thaliana (Mouse-ear cress), this protein is NAP1-related protein 1 (NRP1).